Consider the following 224-residue polypeptide: Cytidylate kinase (224 aa).

11 to 19 (GPAGAGKST) is an ATP binding site.

It belongs to the cytidylate kinase family. Type 1 subfamily.

Its subcellular location is the cytoplasm. The catalysed reaction is CMP + ATP = CDP + ADP. The enzyme catalyses dCMP + ATP = dCDP + ADP. This Exiguobacterium sp. (strain ATCC BAA-1283 / AT1b) protein is Cytidylate kinase.